The chain runs to 204 residues: Holliday junction branch migration complex subunit RuvA (204 aa).

The domain I stretch occupies residues 1–63; that stretch reads MIASLRGTVI…EDAMKLYGFI (63 aa). A domain II region spans residues 64-142; it reads DDQSREMFAL…AYTVGVVDDG (79 aa). Residues 143–151 form a flexible linker region; the sequence is APTAPTQGV. The tract at residues 152 to 204 is domain III; that stretch reads APVVVVDQVTQALTGLGFTEKQADDAVAAVLSADPGLDTSAALRAALAKLGGK.

This sequence belongs to the RuvA family. As to quaternary structure, homotetramer. Forms an RuvA(8)-RuvB(12)-Holliday junction (HJ) complex. HJ DNA is sandwiched between 2 RuvA tetramers; dsDNA enters through RuvA and exits via RuvB. An RuvB hexamer assembles on each DNA strand where it exits the tetramer. Each RuvB hexamer is contacted by two RuvA subunits (via domain III) on 2 adjacent RuvB subunits; this complex drives branch migration. In the full resolvosome a probable DNA-RuvA(4)-RuvB(12)-RuvC(2) complex forms which resolves the HJ.

It is found in the cytoplasm. The RuvA-RuvB-RuvC complex processes Holliday junction (HJ) DNA during genetic recombination and DNA repair, while the RuvA-RuvB complex plays an important role in the rescue of blocked DNA replication forks via replication fork reversal (RFR). RuvA specifically binds to HJ cruciform DNA, conferring on it an open structure. The RuvB hexamer acts as an ATP-dependent pump, pulling dsDNA into and through the RuvAB complex. HJ branch migration allows RuvC to scan DNA until it finds its consensus sequence, where it cleaves and resolves the cruciform DNA. This chain is Holliday junction branch migration complex subunit RuvA, found in Corynebacterium efficiens (strain DSM 44549 / YS-314 / AJ 12310 / JCM 11189 / NBRC 100395).